The sequence spans 188 residues: Elongation factor P (188 aa).

It belongs to the elongation factor P family.

The protein localises to the cytoplasm. It functions in the pathway protein biosynthesis; polypeptide chain elongation. Involved in peptide bond synthesis. Stimulates efficient translation and peptide-bond synthesis on native or reconstituted 70S ribosomes in vitro. Probably functions indirectly by altering the affinity of the ribosome for aminoacyl-tRNA, thus increasing their reactivity as acceptors for peptidyl transferase. The sequence is that of Elongation factor P from Ureaplasma urealyticum serovar 10 (strain ATCC 33699 / Western).